A 507-amino-acid chain; its full sequence is Cytochrome P450 3A28 (507 aa).

Cys-442 contributes to the heme binding site.

This sequence belongs to the cytochrome P450 family. Requires heme as cofactor.

The protein resides in the endoplasmic reticulum membrane. It localises to the microsome membrane. The enzyme catalyses an organic molecule + reduced [NADPH--hemoprotein reductase] + O2 = an alcohol + oxidized [NADPH--hemoprotein reductase] + H2O + H(+). Its function is as follows. Cytochromes P450 are a group of heme-thiolate monooxygenases. In liver microsomes, this enzyme is involved in an NADPH-dependent electron transport pathway. It oxidizes a variety of structurally unrelated compounds, including steroids, fatty acids, and xenobiotics. The polypeptide is Cytochrome P450 3A28 (CYP3A28) (Bos taurus (Bovine)).